The sequence spans 615 residues: 70 kDa neurofilament protein (615 aa).

Residues 1-31 form a disordered region; that stretch reads MSVTQKKTEISTTTTYEGESRPSSGMSGFSY. A head region spans residues 1-99; that stretch reads MSVTQKKTEI…KANREREKQD (99 aa). Over residues 21–30 the composition is skewed to polar residues; the sequence is RPSSGMSGFS. One can recognise an IF rod domain in the interval 96-449; sequence EKQDMRDLNE…KLLEGEESRV (354 aa). Residues 100–135 form a coil 1A region; sequence MRDLNERFANYIEKVRFLEAQNKKLAGELEELKSKW. Residues 136–145 are linker 1; sequence GKETSAIKEM. Residues 146-284 are coil 1B; the sequence is YETELEEARK…VHAQELKELA (139 aa). The tract at residues 285–303 is linker 12; it reads ALAYRDTTAENREFWRNEL. A coil 2 region spans residues 304–449; it reads AQAIRDIQQE…KLLEGEESRV (146 aa). The tract at residues 450–615 is tail; sequence GMKQIVEQVV…ANYTQNTVYQ (166 aa). An LTD domain is found at 499–612; the sequence is AKTTYQRTSK…EDKANYTQNT (114 aa).

This sequence belongs to the intermediate filament family.

The chain is 70 kDa neurofilament protein from Doryteuthis pealeii (Longfin inshore squid).